Here is a 90-residue protein sequence, read N- to C-terminus: Small ribosomal subunit protein uS15 (90 aa).

The protein belongs to the universal ribosomal protein uS15 family. As to quaternary structure, part of the 30S ribosomal subunit. Forms a bridge to the 50S subunit in the 70S ribosome, contacting the 23S rRNA.

Its function is as follows. One of the primary rRNA binding proteins, it binds directly to 16S rRNA where it helps nucleate assembly of the platform of the 30S subunit by binding and bridging several RNA helices of the 16S rRNA. In terms of biological role, forms an intersubunit bridge (bridge B4) with the 23S rRNA of the 50S subunit in the ribosome. This chain is Small ribosomal subunit protein uS15, found in Wolbachia pipientis wMel.